The primary structure comprises 592 residues: Condensin-2 complex subunit H2 (592 aa).

Disordered regions lie at residues 89-116 (NKKRDKQGSSSDGNQEQAPSGSEGDGCE) and 261-285 (EAPSEGRMLRPRPAVQPVSEEPKQL). A compositionally biased stretch (polar residues) spans 96–108 (GSSSDGNQEQAPS).

The protein belongs to the CND2 H2 (condensin-2 subunit 2) family. In terms of assembly, component of the condensin-2 complex, which contains the smc2 and smc4 heterodimer, and three non SMC subunits, ncapg2, ncaph2 and ncapd3 that probably regulate the complex.

The protein resides in the nucleus. Regulatory subunit of the condensin-2 complex, a complex that seems to provide chromosomes with an additional level of organization and rigidity and in establishing mitotic chromosome architecture. In Danio rerio (Zebrafish), this protein is Condensin-2 complex subunit H2 (ncaph2).